Here is a 268-residue protein sequence, read N- to C-terminus: Shikimate dehydrogenase (NADP(+)) (268 aa).

Residues 13–15 (SLS) and Thr-60 each bind shikimate. Lys-64 (proton acceptor) is an active-site residue. Glu-76 is an NADP(+) binding site. Shikimate contacts are provided by Asn-85 and Asp-100. Residues 124 to 128 (GAGGA), 148 to 153 (NRTMAR), and Ile-209 each bind NADP(+). Tyr-211 provides a ligand contact to shikimate. NADP(+) is bound at residue Gly-232.

The protein belongs to the shikimate dehydrogenase family. In terms of assembly, homodimer.

The catalysed reaction is shikimate + NADP(+) = 3-dehydroshikimate + NADPH + H(+). The protein operates within metabolic intermediate biosynthesis; chorismate biosynthesis; chorismate from D-erythrose 4-phosphate and phosphoenolpyruvate: step 4/7. Involved in the biosynthesis of the chorismate, which leads to the biosynthesis of aromatic amino acids. Catalyzes the reversible NADPH linked reduction of 3-dehydroshikimate (DHSA) to yield shikimate (SA). The sequence is that of Shikimate dehydrogenase (NADP(+)) from Staphylococcus aureus (strain MRSA252).